Consider the following 60-residue polypeptide: Large ribosomal subunit protein bL32 (60 aa).

Positions 1-22 (MAVPARHTSKAKKNKRRTHYKL) are disordered. Basic residues predominate over residues 7–20 (HTSKAKKNKRRTHY).

This sequence belongs to the bacterial ribosomal protein bL32 family.

The polypeptide is Large ribosomal subunit protein bL32 (Streptococcus pyogenes serotype M3 (strain ATCC BAA-595 / MGAS315)).